Here is a 300-residue protein sequence, read N- to C-terminus: Ribosomal RNA small subunit methyltransferase H (300 aa).

S-adenosyl-L-methionine is bound by residues 33–35 (GGH), aspartate 53, phenylalanine 78, aspartate 97, and glutamine 104.

The protein belongs to the methyltransferase superfamily. RsmH family.

The protein resides in the cytoplasm. The catalysed reaction is cytidine(1402) in 16S rRNA + S-adenosyl-L-methionine = N(4)-methylcytidine(1402) in 16S rRNA + S-adenosyl-L-homocysteine + H(+). Functionally, specifically methylates the N4 position of cytidine in position 1402 (C1402) of 16S rRNA. In Karelsulcia muelleri (strain GWSS) (Sulcia muelleri), this protein is Ribosomal RNA small subunit methyltransferase H.